The primary structure comprises 547 residues: Chaperonin GroEL 1 (547 aa).

ATP-binding positions include 30-33, Lys-51, 87-91, Gly-415, and Asp-495; these read TLGP and DGTTT.

Belongs to the chaperonin (HSP60) family. As to quaternary structure, forms a cylinder of 14 subunits composed of two heptameric rings stacked back-to-back. Interacts with the co-chaperonin GroES.

It localises to the cytoplasm. The enzyme catalyses ATP + H2O + a folded polypeptide = ADP + phosphate + an unfolded polypeptide.. Together with its co-chaperonin GroES, plays an essential role in assisting protein folding. The GroEL-GroES system forms a nano-cage that allows encapsulation of the non-native substrate proteins and provides a physical environment optimized to promote and accelerate protein folding. This chain is Chaperonin GroEL 1, found in Rhizobium johnstonii (strain DSM 114642 / LMG 32736 / 3841) (Rhizobium leguminosarum bv. viciae).